Here is a 337-residue protein sequence, read N- to C-terminus: Lipopolysaccharide 1,3-galactosyltransferase (337 aa).

UDP is bound by residues 33-38 (GIDKNF) and 130-131 (DA). 2 residues coordinate Mg(2+): D130 and D132. Short sequence motifs (DXD) lie at residues 130 to 132 (DAD) and 219 to 221 (DQD). A Mg(2+)-binding site is contributed by H264. 264–270 (HYIGPTK) provides a ligand contact to UDP.

Belongs to the glycosyltransferase 8 family. Mg(2+) serves as cofactor.

The catalysed reaction is UDP-alpha-D-galactose + [lipopolysaccharide] = UDP + 3-alpha-D-galactosyl-[lipopolysaccharide].. It participates in bacterial outer membrane biogenesis; LPS core biosynthesis. With respect to regulation, inhibited in a competitive manner by closely related nonsubstrate lipopolysaccharides. Its function is as follows. Galactosyltransferase involved in the biosynthesis of the core oligosaccharide region of lipopolysaccharide (LPS). Catalyzes the addition of an alpha l,3-linked galactose (galactose I) to the first outer-core glucose (glucose I). Cannot use UDP-glucose. Activity probably does not require the branched galactose added by WaaB, but it is higher in the presence of this branched galactose. In Salmonella typhimurium (strain LT2 / SGSC1412 / ATCC 700720), this protein is Lipopolysaccharide 1,3-galactosyltransferase.